A 230-amino-acid chain; its full sequence is uncharacterized protein (230 aa).

It to E.coli HemX N-terminal region.

This is an uncharacterized protein from Haemophilus influenzae (strain ATCC 51907 / DSM 11121 / KW20 / Rd).